A 530-amino-acid chain; its full sequence is UPF0422 protein lpl2888 (530 aa).

A signal peptide spans Met1–Ala19. The stretch at Asp20 to Thr66 forms a coiled coil. Positions Leu50 to Ala81 are disordered.

It belongs to the UPF0422 family.

This is UPF0422 protein lpl2888 from Legionella pneumophila (strain Lens).